A 328-amino-acid chain; its full sequence is 4-hydroxythreonine-4-phosphate dehydrogenase (328 aa).

Residues His134 and Thr135 each coordinate substrate. Residues His164, His209, and His265 each coordinate a divalent metal cation. Residues Lys273, Asn282, and Arg291 each coordinate substrate.

This sequence belongs to the PdxA family. In terms of assembly, homodimer. It depends on Zn(2+) as a cofactor. Requires Mg(2+) as cofactor. Co(2+) serves as cofactor.

The protein localises to the cytoplasm. It catalyses the reaction 4-(phosphooxy)-L-threonine + NAD(+) = 3-amino-2-oxopropyl phosphate + CO2 + NADH. The protein operates within cofactor biosynthesis; pyridoxine 5'-phosphate biosynthesis; pyridoxine 5'-phosphate from D-erythrose 4-phosphate: step 4/5. Its function is as follows. Catalyzes the NAD(P)-dependent oxidation of 4-(phosphooxy)-L-threonine (HTP) into 2-amino-3-oxo-4-(phosphooxy)butyric acid which spontaneously decarboxylates to form 3-amino-2-oxopropyl phosphate (AHAP). The protein is 4-hydroxythreonine-4-phosphate dehydrogenase of Vibrio vulnificus (strain CMCP6).